Here is a 396-residue protein sequence, read N- to C-terminus: ATP-dependent RNA helicase eIF4A (396 aa).

Positions 1-20 (MADKGLEDVPEGQIESNYDE) are disordered. A Q motif motif is present at residues 23 to 51 (DSFDAMNLKAELLRGVYAYGFERPSAIQQ). Residues 54-224 (IMPVIKGHDV…TKFMRDPVRI (171 aa)) enclose the Helicase ATP-binding domain. Position 67–74 (67–74 (AQSGTGKT)) interacts with ATP. Residues 172–175 (DEAD) carry the DEAD box motif. The region spanning 235–396 (GIKQFYIAVE…EMPMNVADLI (162 aa)) is the Helicase C-terminal domain.

This sequence belongs to the DEAD box helicase family. eIF4A subfamily. In terms of assembly, component of the eIF4F complex, which composition varies with external and internal environmental conditions. It is composed of at least eIF4A, eIF4E and eIF4G.

The protein localises to the cytoplasm. The enzyme catalyses ATP + H2O = ADP + phosphate + H(+). ATP-dependent RNA helicase which is a subunit of the eIF4F complex involved in cap recognition and is required for mRNA binding to ribosome. In the current model of translation initiation, eIF4A unwinds RNA secondary structures in the 5'-UTR of mRNAs which is necessary to allow efficient binding of the small ribosomal subunit, and subsequent scanning for the initiator codon. The chain is ATP-dependent RNA helicase eIF4A (TIF1) from Phaeosphaeria nodorum (strain SN15 / ATCC MYA-4574 / FGSC 10173) (Glume blotch fungus).